The following is a 540-amino-acid chain: Patellin-4 (540 aa).

The residue at position 53 (Ser-53) is a Phosphoserine. A coiled-coil region spans residues 61-183 (FADLKESEKK…EKKTEDVVTE (123 aa)). Positions 89-140 (LKTKKKESSPMKEKKEEVVKPEAEVEKKKEEAAEEKVEEEKKSEAVVTEEAP) are disordered. A compositionally biased stretch (basic and acidic residues) spans 94 to 140 (KESSPMKEKKEEVVKPEAEVEKKKEEAAEEKVEEEKKSEAVVTEEAP). Residue Lys-249 forms a Glycyl lysine isopeptide (Lys-Gly) (interchain with G-Cter in ubiquitin) linkage. One can recognise a CRAL-TRIO domain in the interval 258 to 428 (GEEFGEDLAT…QYGGFKTVDD (171 aa)). Positions 433–534 (NETVSEVVVK…KKKVLYRYRT (102 aa)) constitute a GOLD domain.

It belongs to the patellin family.

Its subcellular location is the membrane. It localises to the cytoplasm. Carrier protein that may be involved in membrane-trafficking events associated with cell plate formation during cytokinesis. Binds to some hydrophobic molecules such as phosphoinositides and promotes their transfer between the different cellular sites. This Arabidopsis thaliana (Mouse-ear cress) protein is Patellin-4 (PATL4).